An 836-amino-acid chain; its full sequence is Serine/threonine-protein kinase ATG1 (836 aa).

In terms of domain architecture, Protein kinase spans 21–321; sequence YTVEKEIGKG…FNEFFNNEVV (301 aa). Residues 27–35 and Lys-50 contribute to the ATP site; that span reads IGKGSFAIV. Asp-168 acts as the Proton acceptor in catalysis. 3 disordered regions span residues 387-425, 458-489, and 619-642; these read EHYR…GQTR, NNGP…GGRR, and CAID…TPGA. Low complexity predominate over residues 395–404; the sequence is LQGQQQQQQQ. Composition is skewed to polar residues over residues 411–425, 459–468, and 630–640; these read RGST…GQTR, NGPTTNNQGA, and GNPSSNQTLTP. The segment at 571 to 836 is interaction with ATG13; that stretch reads ITPFVESLSA…RLKALKSKMS (266 aa).

The protein belongs to the protein kinase superfamily. Ser/Thr protein kinase family. APG1/unc-51/ULK1 subfamily. In terms of assembly, homodimer. Dimerization requires the presence of ATG13. Forms a ternary complex with ATG13 and ATG17.

It localises to the cytoplasm. It is found in the preautophagosomal structure membrane. It carries out the reaction L-seryl-[protein] + ATP = O-phospho-L-seryl-[protein] + ADP + H(+). The catalysed reaction is L-threonyl-[protein] + ATP = O-phospho-L-threonyl-[protein] + ADP + H(+). Functionally, serine/threonine protein kinase involved in the cytoplasm to vacuole transport (Cvt) and found to be essential in autophagy, where it is required for the formation of autophagosomes. Involved in the clearance of protein aggregates which cannot be efficiently cleared by the proteasome. Required for selective autophagic degradation of the nucleus (nucleophagy) as well as for mitophagy which contributes to regulate mitochondrial quantity and quality by eliminating the mitochondria to a basal level to fulfill cellular energy requirements and preventing excess ROS production. Also involved in endoplasmic reticulum-specific autophagic process, in selective removal of ER-associated degradation (ERAD) substrates. Plays a key role in ATG9 and ATG23 cycling through the pre-autophagosomal structure and is necessary to promote ATG18 binding to ATG9 through phosphorylation of ATG9. Catalyzes phosphorylation of ATG4, decreasing the interaction between ATG4 and ATG8 and impairing deconjugation of PE-conjugated forms of ATG8. This is Serine/threonine-protein kinase ATG1 from Kluyveromyces marxianus (strain DMKU3-1042 / BCC 29191 / NBRC 104275) (Yeast).